We begin with the raw amino-acid sequence, 807 residues long: Serine/threonine-protein kinase AfsK (807 aa).

In terms of domain architecture, Protein kinase spans 16–272; that stretch reads FEVLGRLGAG…QAQLAPHLFA (257 aa). ATP contacts are provided by residues 22–30 and Lys44; that span reads LGAGGMGLV. Residue Ser71 is modified to Phosphoserine; by autocatalysis. The active-site Proton acceptor is Asp138. Thr168 carries the post-translational modification Phosphothreonine; by autocatalysis. Disordered stretches follow at residues 292–328 and 353–429; these read MIER…HRLA and AGPS…PSPA. A compositionally biased stretch (basic residues) spans 297-315; that stretch reads RGGRRTARRPPRPRPRRLR. The segment covering 353 to 363 has biased composition (low complexity); it reads AGPSAAPDGGP.

The protein belongs to the protein kinase superfamily. Ser/Thr protein kinase family. In terms of assembly, interacts (via the N-terminal kinase domain) with KbpA; the interaction prevents autophosphorylation of AfsK. Post-translationally, autophosphorylated mainly on threonine residues. Some phosphorylation on serine residues. Autophosphorylation on Thr-168 is the major site enhancing kinase activity towards AfsR, and is regulated though interaction with KbpA.

The catalysed reaction is L-seryl-[protein] + ATP = O-phospho-L-seryl-[protein] + ADP + H(+). It catalyses the reaction L-threonyl-[protein] + ATP = O-phospho-L-threonyl-[protein] + ADP + H(+). Its function is as follows. Component of the AfsK/AfsR system involved in the response of aerial mycelium formation to glucose. This is Serine/threonine-protein kinase AfsK (afsK) from Streptomyces griseus.